The chain runs to 353 residues: Chloroplastic lipocalin (353 aa).

Low complexity predominate over residues Met1–Ser18. The interval Met1 to Thr27 is disordered. The transit peptide at Met1–Cys39 directs the protein to the chloroplast. The cysteines at positions 163 and 299 are disulfide-linked.

The protein belongs to the calycin superfamily. Lipocalin family. In terms of tissue distribution, expressed in leaves at low levels (at protein levels). Present in seeds.

The protein resides in the plastid. Its subcellular location is the chloroplast thylakoid lumen. Lipocalin that prevents thylakoidal membrane lipids peroxidation and confers protection against oxidative stress, especially mediated by singlet oxygen in response to high light and other stress (e.g. heat shocks). Required for seed longevity by ensuring polyunsaturated lipids integrity. The protein is Chloroplastic lipocalin of Arabidopsis thaliana (Mouse-ear cress).